Reading from the N-terminus, the 665-residue chain is DNA ligase (665 aa).

NAD(+) is bound by residues 31-35 (DEEFD), 80-81 (SL), and glutamate 111. Residue lysine 113 is the N6-AMP-lysine intermediate of the active site. Residues arginine 134, glutamate 171, lysine 287, and lysine 311 each coordinate NAD(+). Zn(2+) contacts are provided by cysteine 405, cysteine 408, cysteine 423, and cysteine 429. Residues 588–665 (FTNHAFQGKI…NEKEFISLCH (78 aa)) enclose the BRCT domain.

Belongs to the NAD-dependent DNA ligase family. LigA subfamily. Mg(2+) is required as a cofactor. It depends on Mn(2+) as a cofactor.

The catalysed reaction is NAD(+) + (deoxyribonucleotide)n-3'-hydroxyl + 5'-phospho-(deoxyribonucleotide)m = (deoxyribonucleotide)n+m + AMP + beta-nicotinamide D-nucleotide.. Functionally, DNA ligase that catalyzes the formation of phosphodiester linkages between 5'-phosphoryl and 3'-hydroxyl groups in double-stranded DNA using NAD as a coenzyme and as the energy source for the reaction. It is essential for DNA replication and repair of damaged DNA. This Protochlamydia amoebophila (strain UWE25) protein is DNA ligase.